The sequence spans 352 residues: GTPase Obg (352 aa).

One can recognise an Obg domain in the interval 1–159 (MHFLDQAKIF…MYVWLRLKLL (159 aa)). The tract at residues 122–142 (DGGRGNASYKTSTNRAPRQHG) is disordered. In terms of domain architecture, OBG-type G spans 160-328 (ADAGLVGLPN…LLDAVLEYLP (169 aa)). Residues 166-173 (GLPNAGKS), 191-195 (FTTLR), 212-215 (DIPG), 280-283 (NKID), and 309-311 (SGA) contribute to the GTP site. Mg(2+)-binding residues include serine 173 and threonine 193.

The protein belongs to the TRAFAC class OBG-HflX-like GTPase superfamily. OBG GTPase family. In terms of assembly, monomer. Requires Mg(2+) as cofactor.

The protein localises to the cytoplasm. In terms of biological role, an essential GTPase which binds GTP, GDP and possibly (p)ppGpp with moderate affinity, with high nucleotide exchange rates and a fairly low GTP hydrolysis rate. Plays a role in control of the cell cycle, stress response, ribosome biogenesis and in those bacteria that undergo differentiation, in morphogenesis control. This chain is GTPase Obg, found in Novosphingobium aromaticivorans (strain ATCC 700278 / DSM 12444 / CCUG 56034 / CIP 105152 / NBRC 16084 / F199).